The sequence spans 180 residues: Large ribosomal subunit protein uL5 (180 aa).

The protein belongs to the universal ribosomal protein uL5 family. Forms a bridge to the 30S subunit in the 70S ribosome. Part of the 50S ribosomal subunit; part of the 5S rRNA/L5/L18/L25 (CTC) subcomplex. Is known to contact the 5S rRNA, 23S rRNA and the P site tRNA.

This is one of the proteins that bind and probably mediate the attachment of the 5S RNA into the large ribosomal subunit, where it forms part of the central protuberance. In the 70S ribosome it contacts protein S13 of the 30S subunit (bridge B1b), connecting the 2 subunits; this bridge is implicated in subunit movement. Contacts the P site tRNA; the 5S rRNA and some of its associated proteins might help stabilize positioning of ribosome-bound tRNAs. This Deinococcus radiodurans (strain ATCC 13939 / DSM 20539 / JCM 16871 / CCUG 27074 / LMG 4051 / NBRC 15346 / NCIMB 9279 / VKM B-1422 / R1) protein is Large ribosomal subunit protein uL5 (rplE).